The sequence spans 386 residues: uncharacterized protein (386 aa).

Lys185 is modified (N6-(pyridoxal phosphate)lysine).

The protein belongs to the DegT/DnrJ/EryC1 family. Pyridoxal 5'-phosphate is required as a cofactor.

This is an uncharacterized protein from Methanocaldococcus jannaschii (strain ATCC 43067 / DSM 2661 / JAL-1 / JCM 10045 / NBRC 100440) (Methanococcus jannaschii).